The chain runs to 636 residues: MTTWSLRRRPARTLGLLLLVVLGFLVLRRLDWSTLVPLRLRHRQLGLQAKGWNFMLEDSTFWIFGGSIHYFRVPREYWRDRLLKMKACGLNTLTTYVPWNLHEPERGKFDFSGNLDLEAFVLMAAEIGLWVILRPGPYICSEMDLGGLPSWLLQDPGMRLRTTYKGFTEAVDLYFDHLMSRVVPLQYKRGGPIIAVQVENEYGSYNKDPAYMPYVKKALEDRGIVELLLTSDNKDGLSKGIVQGVLATINLQSTHELQLLTTFLFNVQGTQPKMVMEYWTGWFDSWGGPHNILDSSEVLKTVSAIVDAGSSINLYMFHGGTNFGFMNGAMHFHDYKSDVTSYDYDAVLTEAGDYTAKYMKLRDFFGSISGIPLPPPPDLLPKMPYEPLTPVLYLSLWDALKYLGEPIKSEKPINMENLPVNGGNGQSFGYILYETSITSSGILSGHVHDRGQVFVNTVSIGFLDYKTTKIAVPLIQGYTVLRILVENRGRVNYGENIDDQRKGLIGNLYLNDSPLKNFRIYSLDMKKSFFQRFGLDKWSSLPETPTLPAFFLGSLSISSTPCDTFLKLEGWEKGVVFINGQNLGRYWNIGPQKTLYLPGPWLSSGINQVIVFEETMAGPALQFTETPHLGRNQYIK.

The first 32 residues, 1–32 (MTTWSLRRRPARTLGLLLLVVLGFLVLRRLDW), serve as a signal peptide directing secretion. Glutamate 201 (proton donor) is an active-site residue. Glutamate 277 (nucleophile) is an active-site residue.

The protein belongs to the glycosyl hydrolase 35 family.

Its subcellular location is the secreted. The polypeptide is Beta-galactosidase-1-like protein 2 (GLB1L2) (Homo sapiens (Human)).